A 311-amino-acid chain; its full sequence is Malate dehydrogenase (311 aa).

NAD(+) contacts are provided by residues 7 to 13 and Asp34; that span reads GAAGGIG. The substrate site is built by Arg81 and Arg87. Residues Asn94 and 117 to 119 contribute to the NAD(+) site; that span reads ITN. Substrate contacts are provided by Asn119 and Arg153. Catalysis depends on His177, which acts as the Proton acceptor. Residue Met227 coordinates NAD(+).

This sequence belongs to the LDH/MDH superfamily. MDH type 1 family. In terms of assembly, homodimer.

It carries out the reaction (S)-malate + NAD(+) = oxaloacetate + NADH + H(+). In terms of biological role, catalyzes the reversible oxidation of malate to oxaloacetate. This is Malate dehydrogenase from Shewanella baltica (strain OS155 / ATCC BAA-1091).